Reading from the N-terminus, the 1079-residue chain is Intraflagellar transport protein 80 (1079 aa).

A disordered region spans residues 495 to 514; it reads GDMIRPSTVQNQPSTQGLPN. Positions 501–514 are enriched in polar residues; it reads STVQNQPSTQGLPN.

It is found in the cell projection. It localises to the cilium. The protein resides in the flagellum. The protein localises to the cytoplasm. Its subcellular location is the cytoskeleton. It is found in the flagellum axoneme. It localises to the flagellum basal body. Functionally, component of the intraflagellar transport complex B (IFT-B) involved in flagellar assembly. This is Intraflagellar transport protein 80 from Giardia intestinalis (strain ATCC 50803 / WB clone C6) (Giardia lamblia).